A 352-amino-acid polypeptide reads, in one-letter code: Beta-hexosaminidase (352 aa).

Substrate is bound by residues D74, R82, R149, and K179–H180. H192 functions as the Proton donor/acceptor in the catalytic mechanism. The active-site Nucleophile is the D263.

It belongs to the glycosyl hydrolase 3 family. NagZ subfamily.

It localises to the cytoplasm. It carries out the reaction Hydrolysis of terminal non-reducing N-acetyl-D-hexosamine residues in N-acetyl-beta-D-hexosaminides.. The protein operates within cell wall biogenesis; peptidoglycan recycling. Plays a role in peptidoglycan recycling by cleaving the terminal beta-1,4-linked N-acetylglucosamine (GlcNAc) from peptide-linked peptidoglycan fragments, giving rise to free GlcNAc, anhydro-N-acetylmuramic acid and anhydro-N-acetylmuramic acid-linked peptides. This is Beta-hexosaminidase from Bordetella pertussis (strain Tohama I / ATCC BAA-589 / NCTC 13251).